Here is a 378-residue protein sequence, read N- to C-terminus: Probable protein phosphatase 2C 55 (378 aa).

2 disordered regions span residues 1–59 and 79–115; these read MRRH…ASKG and EGEASSRGPAASRGGRRGRNSKRQPPRSRFDGDGVGC. The span at 7-26 shows a compositional bias: low complexity; the sequence is LGLLRRAAASSTSAASSRAG. Basic residues predominate over residues 92–104; the sequence is GGRRGRNSKRQPP. The PPM-type phosphatase domain occupies 122–369; the sequence is SWGYSSFQGR…DNVTCIVLQF (248 aa). Mn(2+)-binding residues include Asp-158, Gly-159, Asp-321, and Asp-360.

This sequence belongs to the PP2C family. Mg(2+) is required as a cofactor. Mn(2+) serves as cofactor.

The catalysed reaction is O-phospho-L-seryl-[protein] + H2O = L-seryl-[protein] + phosphate. It carries out the reaction O-phospho-L-threonyl-[protein] + H2O = L-threonyl-[protein] + phosphate. This chain is Probable protein phosphatase 2C 55, found in Oryza sativa subsp. japonica (Rice).